Reading from the N-terminus, the 863-residue chain is Scm-like with four MBT domains protein 1 (863 aa).

4 MBT repeats span residues 20–120 (FSWE…LEAP), 128–232 (SDWN…LQPP), 242–346 (ADWQ…INPP), and 354–451 (FDWA…LSTP). The tract at residues 638 to 773 (KKKNKRIGRP…SDDENKPPSP (136 aa)) is disordered. Positions 660-679 (KSSKRRKRRKNIFVHKKKRS) are enriched in basic residues. Positions 680-691 (SASVDNTPVGSP) are enriched in polar residues. Composition is skewed to acidic residues over residues 696 to 710 (GEDE…EDSL) and 718 to 727 (QQEELQEESE). The segment covering 734-744 (SSSSPTQSETP) has biased composition (low complexity). 2 positions are modified to phosphoserine: Ser764 and Ser772. The SAM domain maps to 793 to 861 (WSVADVVRFI…RIKFAFYEQF (69 aa)).

As to quaternary structure, interacts with MYOD1. Component of the SLC (SFMBT1-LSD1-CoREST) corepressor complex, which also contains KDM1A/LSD1 and RCOR1/CoREST. Interacts with KDM1A/LSD1 and RCOR1/CoREST. Interacts with MYOD1. Interacts with L3MBTL3. In terms of tissue distribution, highly expressed in the testis, low expression is detected in brain, kidney, heart and lung. Highly expressed in germ cells, where it associates with the synaptic regions of meiotic chromosomes in pachytene stage spermatocytes.

Its subcellular location is the nucleus. Histone-binding protein, which is part of various corepressor complexes. Mediates the recruitment of corepressor complexes to target genes, followed by chromatin compaction and repression of transcription. Plays a role during myogenesis: required for the maintenance of undifferentiated states of myogenic progenitor cells via interaction with MYOD1. Interaction with MYOD1 leads to the recruitment of associated corepressors and silencing of MYOD1 target genes. Part of the SLC complex in germ cells, where it may play a role during spermatogenesis. The protein is Scm-like with four MBT domains protein 1 (Sfmbt1) of Mus musculus (Mouse).